The chain runs to 325 residues: Pyruvate dehydrogenase E1 component subunit beta (325 aa).

Glu-60 serves as a coordination point for thiamine diphosphate.

In terms of assembly, heterodimer of an alpha and a beta chain. Thiamine diphosphate serves as cofactor.

The catalysed reaction is N(6)-[(R)-lipoyl]-L-lysyl-[protein] + pyruvate + H(+) = N(6)-[(R)-S(8)-acetyldihydrolipoyl]-L-lysyl-[protein] + CO2. Its function is as follows. The pyruvate dehydrogenase complex catalyzes the overall conversion of pyruvate to acetyl-CoA and CO(2). It contains multiple copies of three enzymatic components: pyruvate dehydrogenase (E1), dihydrolipoamide acetyltransferase (E2) and lipoamide dehydrogenase (E3). The polypeptide is Pyruvate dehydrogenase E1 component subunit beta (pdhB) (Staphylococcus aureus (strain COL)).